The following is a 122-amino-acid chain: MIPGEYIIKNEFITLNDGRRTLNIKVSNTGDRPVQVGSHYHFFEVNRYLEFDRKSAFGMRLDIPSGTAVRFEPGEEKTVQLVEIGGSREIYGLNDLTCGPLDREDLSNVFKKAKELGFKGVE.

This sequence belongs to the urease beta subunit family. Heterotrimer of UreA (gamma), UreB (beta) and UreC (alpha) subunits. Three heterotrimers associate to form the active enzyme.

It is found in the cytoplasm. The enzyme catalyses urea + 2 H2O + H(+) = hydrogencarbonate + 2 NH4(+). It participates in nitrogen metabolism; urea degradation; CO(2) and NH(3) from urea (urease route): step 1/1. The polypeptide is Urease subunit beta (Acetivibrio thermocellus (strain ATCC 27405 / DSM 1237 / JCM 9322 / NBRC 103400 / NCIMB 10682 / NRRL B-4536 / VPI 7372) (Clostridium thermocellum)).